Consider the following 345-residue polypeptide: Probable velvet family sexual development regulator LACBIDRAFT_317102 (345 aa).

Composition is skewed to polar residues over residues 1–13 (MFTTHPQGRSYRS) and 24–38 (EIQNSYDQHANNPPR). Disordered stretches follow at residues 1-43 (MFTT…TRRR), 138-189 (ESWT…SPSS), and 310-345 (RKRRKKGEIGSPLDDPKSKRKRTSLGSEDDEASDED). In terms of domain architecture, Velvet spans 62-306 (GQTIRAELDE…ARWGVRLNIR (245 aa)). Composition is skewed to low complexity over residues 141-158 (TSRSPTQTSFSSSSPTLS) and 167-184 (SSPQTSSPTAAQSQASTP). Acidic residues predominate over residues 336–345 (SEDDEASDED).

Belongs to the velvet family.

The protein resides in the nucleus. Its function is as follows. Velvet-domain-containing protein that probably acts as a positive regulator of sexual development. This chain is Probable velvet family sexual development regulator LACBIDRAFT_317102, found in Laccaria bicolor (strain S238N-H82 / ATCC MYA-4686) (Bicoloured deceiver).